We begin with the raw amino-acid sequence, 99 residues long: MMMDKQVEEVKKHYPIVEDWSVIVARKEDDCMTVTDAVPFILAGYKNVSYEMDDIVVLCSEPIGLTWEDVRFLKNHEGSVSFEEIGYEDKAMVYHVDLG.

The sequence is that of Putative gene 45 protein (45) from Bacillus phage SP01 (Bacteriophage SP01).